The primary structure comprises 163 residues: Nucleotide-binding protein C8J_0350 (163 aa).

Belongs to the YajQ family.

Its function is as follows. Nucleotide-binding protein. The polypeptide is Nucleotide-binding protein C8J_0350 (Campylobacter jejuni subsp. jejuni serotype O:6 (strain 81116 / NCTC 11828)).